Consider the following 198-residue polypeptide: Sensory transduction protein RegX3 (198 aa).

Residues 1 to 87 (MVTDGPAALA…ELIARIRAVL (87 aa)) enclose the Response regulatory domain. D23 carries the post-translational modification 4-aspartylphosphate. Residues 99–198 (DGVLESGPLR…VRGLGYKLES (100 aa)) constitute a DNA-binding region (ompR/PhoB-type).

Post-translationally, phosphorylated by SenX3.

Member of the two-component regulatory system SenX3/RegX3. The chain is Sensory transduction protein RegX3 (rgx3) from Mycobacterium leprae (strain TN).